A 118-amino-acid chain; its full sequence is Hydrogenase maturation factor HypA (118 aa).

His-2 lines the Ni(2+) pocket. Positions 73, 76, 89, and 92 each coordinate Zn(2+).

It belongs to the HypA/HybF family.

Functionally, involved in the maturation of [NiFe] hydrogenases. Required for nickel insertion into the metal center of the hydrogenase. The polypeptide is Hydrogenase maturation factor HypA (Shewanella sp. (strain MR-7)).